The chain runs to 1479 residues: Chromosome partition protein MukB (1479 aa).

Residue 34–41 (GGNGAGKS) coordinates ATP. 5 coiled-coil regions span residues 337–418 (LNLV…QYQQ), 511–603 (QAER…RAPV), 780–810 (RAAR…DVQK), 847–1116 (ELDR…AKAG), and 1206–1265 (DDPV…LQAV). The interval 666–783 (PGGSEDPRLN…EVPLFGRAAR (118 aa)) is flexible hinge.

The protein belongs to the SMC family. MukB subfamily. In terms of assembly, homodimerization via its hinge domain. Binds to DNA via its C-terminal region. Interacts, and probably forms a ternary complex, with MukE and MukF via its C-terminal region. The complex formation is stimulated by calcium or magnesium. Interacts with tubulin-related protein FtsZ.

It localises to the cytoplasm. It is found in the nucleoid. In terms of biological role, plays a central role in chromosome condensation, segregation and cell cycle progression. Functions as a homodimer, which is essential for chromosome partition. Involved in negative DNA supercoiling in vivo, and by this means organize and compact chromosomes. May achieve or facilitate chromosome segregation by condensation DNA from both sides of a centrally located replisome during cell division. This is Chromosome partition protein MukB from Pectobacterium carotovorum subsp. carotovorum (strain PC1).